We begin with the raw amino-acid sequence, 117 residues long: UPF0102 protein Clos_1471 (117 aa).

Belongs to the UPF0102 family.

In Alkaliphilus oremlandii (strain OhILAs) (Clostridium oremlandii (strain OhILAs)), this protein is UPF0102 protein Clos_1471.